The following is a 445-amino-acid chain: MEKIKVALVSLGCDKNRIDSELMLYKLNEEAELVKDPKEAQVIIVNTCGFIETAKEESINTILQMASYKKTHNCKVLVVTGCLTQRYKGELKELIPEMDIMLGVNDYDKLLESIKVFLKSGEKSFYHKYSDTKINEGNRILTTPTYTAYVRIAEGCNNFCTYCAIPRIRGKYRSRKKENILKEVENLAKQGVKEIILIAQDTTMYGIDIYGKKVLHELLRDISKVEGVKWIRLLYCYPEEITKELIEEIKNNDKVCKYLDLPIQQISNSVLKRMGRKTTKETIINIIKKLRKEIEGITLRTSLIVGFPGETEGEFSELKEFVSDVKLDKLGVFKYSKEEGTSAALMEEQIDEEIKEKREEEIMILQQSISKDINKEKIGKTYEVIVEGTKEDMYYGRNYEMSPEIDGEIYFEKDENVKIGDIIKVKVTHSLEYDLIGVVYNELSK.

Positions 4–119 (IKVALVSLGC…LLESIKVFLK (116 aa)) constitute an MTTase N-terminal domain. C13, C48, C82, C156, C160, and C163 together coordinate [4Fe-4S] cluster. In terms of domain architecture, Radical SAM core spans 142–372 (TTPTYTAYVR…MILQQSISKD (231 aa)). The TRAM domain occupies 375 to 441 (KEKIGKTYEV…EYDLIGVVYN (67 aa)).

This sequence belongs to the methylthiotransferase family. RimO subfamily. The cofactor is [4Fe-4S] cluster.

It is found in the cytoplasm. The catalysed reaction is L-aspartate(89)-[ribosomal protein uS12]-hydrogen + (sulfur carrier)-SH + AH2 + 2 S-adenosyl-L-methionine = 3-methylsulfanyl-L-aspartate(89)-[ribosomal protein uS12]-hydrogen + (sulfur carrier)-H + 5'-deoxyadenosine + L-methionine + A + S-adenosyl-L-homocysteine + 2 H(+). Catalyzes the methylthiolation of an aspartic acid residue of ribosomal protein uS12. The protein is Ribosomal protein uS12 methylthiotransferase RimO of Clostridium botulinum (strain ATCC 19397 / Type A).